The following is a 227-amino-acid chain: Cytidylate kinase (227 aa).

ATP is bound at residue 10-18 (GPASSGKST).

It belongs to the cytidylate kinase family. Type 1 subfamily.

Its subcellular location is the cytoplasm. It carries out the reaction CMP + ATP = CDP + ADP. The enzyme catalyses dCMP + ATP = dCDP + ADP. This is Cytidylate kinase from Streptococcus agalactiae serotype V (strain ATCC BAA-611 / 2603 V/R).